The primary structure comprises 316 residues: Ornithine carbamoyltransferase (316 aa).

Residues 57-60, glutamine 84, arginine 108, and 135-138 each bind carbamoyl phosphate; these read STRT and HPCQ. L-ornithine contacts are provided by residues asparagine 166, aspartate 230, and 234-235; that span reads SM. Residues 269–270 and arginine 297 each bind carbamoyl phosphate; that span reads CL.

Belongs to the aspartate/ornithine carbamoyltransferase superfamily. OTCase family.

Its subcellular location is the cytoplasm. The catalysed reaction is carbamoyl phosphate + L-ornithine = L-citrulline + phosphate + H(+). Its pathway is amino-acid biosynthesis; L-arginine biosynthesis; L-arginine from L-ornithine and carbamoyl phosphate: step 1/3. In terms of biological role, reversibly catalyzes the transfer of the carbamoyl group from carbamoyl phosphate (CP) to the N(epsilon) atom of ornithine (ORN) to produce L-citrulline. This chain is Ornithine carbamoyltransferase (argF), found in Bacillus cereus (strain ATCC 14579 / DSM 31 / CCUG 7414 / JCM 2152 / NBRC 15305 / NCIMB 9373 / NCTC 2599 / NRRL B-3711).